A 508-amino-acid polypeptide reads, in one-letter code: Photosystem II CP47 reaction center protein (508 aa).

The next 6 helical transmembrane spans lie at 21–36 (SVHI…WAGS), 101–115 (IVFS…IWHW), 140–156 (GIHL…FGAF), 203–218 (IAAG…FHLS), 237–252 (VLSS…AFVV), and 457–472 (SFAL…HGAR).

Belongs to the PsbB/PsbC family. PsbB subfamily. As to quaternary structure, PSII is composed of 1 copy each of membrane proteins PsbA, PsbB, PsbC, PsbD, PsbE, PsbF, PsbH, PsbI, PsbJ, PsbK, PsbL, PsbM, PsbT, PsbX, PsbY, PsbZ, Psb30/Ycf12, at least 3 peripheral proteins of the oxygen-evolving complex and a large number of cofactors. It forms dimeric complexes. Binds multiple chlorophylls. PSII binds additional chlorophylls, carotenoids and specific lipids. is required as a cofactor.

The protein localises to the plastid. The protein resides in the chloroplast thylakoid membrane. Functionally, one of the components of the core complex of photosystem II (PSII). It binds chlorophyll and helps catalyze the primary light-induced photochemical processes of PSII. PSII is a light-driven water:plastoquinone oxidoreductase, using light energy to abstract electrons from H(2)O, generating O(2) and a proton gradient subsequently used for ATP formation. This chain is Photosystem II CP47 reaction center protein, found in Barbarea verna (Land cress).